Reading from the N-terminus, the 336-residue chain is Transmembrane protein 19 (336 aa).

Helical transmembrane passes span 15-35 (MITN…FWII), 49-69 (ISPW…SNGL), 84-104 (VVGF…LMFF), 218-238 (VTVV…IAYF), 257-277 (IIAF…YLGA), and 313-333 (VNLF…WGFW).

Belongs to the TMEM19 family.

The protein localises to the membrane. In Homo sapiens (Human), this protein is Transmembrane protein 19 (TMEM19).